Here is a 130-residue protein sequence, read N- to C-terminus: Small ribosomal subunit protein uS8 (130 aa).

It belongs to the universal ribosomal protein uS8 family. In terms of assembly, part of the 30S ribosomal subunit. Contacts proteins S5 and S12.

Functionally, one of the primary rRNA binding proteins, it binds directly to 16S rRNA central domain where it helps coordinate assembly of the platform of the 30S subunit. This Pseudomonas aeruginosa (strain UCBPP-PA14) protein is Small ribosomal subunit protein uS8.